The primary structure comprises 1912 residues: Methylcytosine dioxygenase TET2 (1912 aa).

Basic and acidic residues predominate over residues 1–11 (MEQDRTTHAEG). Residues 1 to 86 (MEQDRTTHAE…PHEDRGYSRC (86 aa)) form a disordered region. 2 positions are modified to phosphoserine: serine 15 and serine 23. Residues 53-74 (TKWQSSQSCYGISHMKGSQSSH) are compositionally biased toward polar residues. 2 positions are modified to phosphoserine: serine 76 and serine 97. 8 disordered regions span residues 112-166 (LDQK…FPTR), 340-359 (DRNLQASHGSSEQYSKQKET), 367-388 (SSKFPKDSISPTTVTPPSQSLL), 429-470 (IDHQ…PEKS), 673-723 (PQTQ…DKQR), 832-862 (EQAQKPQQASSLQGLKDRSQGESPAPPAEAA), 907-966 (QEQQ…NGQP), and 1009-1052 (ESEN…EGCN). Polar residues-rich tracts occupy residues 135–158 (SRQPNVSGLSDNGEPVTSTTQESS), 340–353 (DRNLQASHGSSEQY), 367–387 (SSKFPKDSISPTTVTPPSQSL), 434–447 (KTSSSQSLNPSVHT), and 673–689 (PQTQASQTPASQNSNFP). Positions 690-701 (QICQQQQQQQLQ) are enriched in low complexity. 2 stretches are compositionally biased toward polar residues: residues 707–719 (QMPQTFSHLQGSN) and 832–844 (EQAQKPQQASSLQ). Positions 907–921 (QEQQQTQQSQPGHNQ) are enriched in low complexity. Polar residues-rich tracts occupy residues 944–966 (PQENMSSRIKQEISSPSRDNGQP) and 1036–1046 (SDTPGEQSQNG). Serine 1036 carries the phosphoserine modification. Zn(2+) is bound by residues cysteine 1048, cysteine 1106, histidine 1132, and cysteine 1134. Arginine 1174 lines the 2-oxoglutarate pocket. Zn(2+)-binding residues include cysteine 1184, cysteine 1186, cysteine 1202, and cysteine 1211. Residues 1203-1216 (SWSMYYNGCKFARS) are interaction with DNA. Residue lysine 1212 forms a Glycyl lysine isopeptide (Lys-Gly) (interchain with G-Cter in ubiquitin) linkage. Position 1271 (cysteine 1271) interacts with Zn(2+). 2-oxoglutarate is bound at residue cysteine 1287. Histidine 1293 is a binding site for Zn(2+). Residues histidine 1295 and aspartate 1297 each contribute to the Fe cation site. Asparagine 1300 serves as a coordination point for substrate. Histidine 1329 provides a ligand contact to 2-oxoglutarate. Disordered regions lie at residues 1379–1414 (KKKAEPKKAKTKKAARKRSSLENCSSRTEKGKSSSH) and 1444–1514 (LQRH…HTSD). The span at 1387–1396 (AKTKKAARKR) shows a compositional bias: basic residues. Residues 1456 to 1473 (QPQPPQPQPQTTPQPQPQ) show a composition bias toward pro residues. Over residues 1480-1512 (GNSQSVGSHCSGSTSVYTRQPTPHSPYPSSAHT) the composition is skewed to polar residues. Fe cation is bound at residue histidine 1795. 1810 to 1812 (RIS) contacts 2-oxoglutarate. 1816 to 1818 (YRH) is a binding site for substrate. Histidine 1826 is a Zn(2+) binding site. The span at 1842–1866 (EEECGKNGSDHVSQKNHGKQEKREP) shows a compositional bias: basic and acidic residues. The interval 1842–1871 (EEECGKNGSDHVSQKNHGKQEKREPTGPQE) is disordered.

This sequence belongs to the TET family. In terms of assembly, interacts with HCFC1. Interacts with OGT. Interacts with PROSER1; this interaction mediates TET2 O-GlcNAcylation and stability by promoting the interaction between OGT and TET2. Directly interacts (via C-terminus) with the DCAF1 component of the CRL4(VprBP) E3 ubiquitin-protein ligase complex. It depends on Fe(2+) as a cofactor. The cofactor is Zn(2+). Post-translationally, may be glycosylated. It is unclear whether interaction with OGT leads to GlcNAcylation. According to a report, it is GlcNAcylated by OGT. In contrast, another group reports no GlcNAcylation by OGT in human ortholog. In terms of processing, monoubiquitinated at Lys-1212 by the DCX (DDB1-CUL4-X-box) E3 ubiquitin-protein ligase complex called CRL4(VprBP) or CUL4A-RBX1-DDB1-DCAF1/VPRBP complex; this modification promotes binding to DNA. Acetylated. As to expression, expressed in the brain, kidney, heart, lung, muscle and stomach. Expressed in germinal vesicle (GV) stage and MII-stage oocytes and in early embryos. Present in embryonic stem cells (ES cells).

Its subcellular location is the nucleus. It localises to the chromosome. The enzyme catalyses a 5-methyl-2'-deoxycytidine in DNA + 2-oxoglutarate + O2 = a 5-hydroxymethyl-2'-deoxycytidine in DNA + succinate + CO2. It catalyses the reaction a 5-hydroxymethyl-2'-deoxycytidine in DNA + 2-oxoglutarate + O2 = a 5-formyl-2'-deoxycytidine in DNA + succinate + CO2 + H2O. It carries out the reaction a 5-formyl-2'-deoxycytidine in DNA + 2-oxoglutarate + O2 = a 5-carboxyl-2'-deoxycytidine in DNA + succinate + CO2 + H(+). In terms of biological role, dioxygenase that catalyzes the conversion of the modified genomic base 5-methylcytosine (5mC) into 5-hydroxymethylcytosine (5hmC) and plays a key role in active DNA demethylation. Has a preference for 5-hydroxymethylcytosine in CpG motifs. Also mediates subsequent conversion of 5hmC into 5-formylcytosine (5fC), and conversion of 5fC to 5-carboxylcytosine (5caC). Conversion of 5mC into 5hmC, 5fC and 5caC probably constitutes the first step in cytosine demethylation. Methylation at the C5 position of cytosine bases is an epigenetic modification of the mammalian genome which plays an important role in transcriptional regulation. In addition to its role in DNA demethylation, also involved in the recruitment of the O-GlcNAc transferase OGT to CpG-rich transcription start sites of active genes, thereby promoting histone H2B GlcNAcylation by OGT. The protein is Methylcytosine dioxygenase TET2 (Tet2) of Mus musculus (Mouse).